The primary structure comprises 106 residues: ATP-dependent Clp protease adapter protein ClpS (106 aa).

Belongs to the ClpS family. In terms of assembly, binds to the N-terminal domain of the chaperone ClpA.

In terms of biological role, involved in the modulation of the specificity of the ClpAP-mediated ATP-dependent protein degradation. In Salmonella arizonae (strain ATCC BAA-731 / CDC346-86 / RSK2980), this protein is ATP-dependent Clp protease adapter protein ClpS.